Reading from the N-terminus, the 865-residue chain is Alanine--tRNA ligase (865 aa).

4 residues coordinate Zn(2+): histidine 552, histidine 556, cysteine 654, and histidine 658.

It belongs to the class-II aminoacyl-tRNA synthetase family. Zn(2+) serves as cofactor.

Its subcellular location is the cytoplasm. It catalyses the reaction tRNA(Ala) + L-alanine + ATP = L-alanyl-tRNA(Ala) + AMP + diphosphate. Catalyzes the attachment of alanine to tRNA(Ala) in a two-step reaction: alanine is first activated by ATP to form Ala-AMP and then transferred to the acceptor end of tRNA(Ala). Also edits incorrectly charged Ser-tRNA(Ala) and Gly-tRNA(Ala) via its editing domain. The polypeptide is Alanine--tRNA ligase (Coxiella burnetii (strain RSA 331 / Henzerling II)).